The chain runs to 96 residues: Large ribosomal subunit protein bL21 (96 aa).

The protein belongs to the bacterial ribosomal protein bL21 family. In terms of assembly, part of the 50S ribosomal subunit. Contacts protein L20.

Functionally, this protein binds to 23S rRNA in the presence of protein L20. The polypeptide is Large ribosomal subunit protein bL21 (Hydrogenobaculum sp. (strain Y04AAS1)).